Here is a 155-residue protein sequence, read N- to C-terminus: Deoxyuridine 5'-triphosphate nucleotidohydrolase (155 aa).

Substrate contacts are provided by residues 74–76 (RSG), N87, and 91–93 (TID).

This sequence belongs to the dUTPase family. The cofactor is Mg(2+).

It carries out the reaction dUTP + H2O = dUMP + diphosphate + H(+). Its pathway is pyrimidine metabolism; dUMP biosynthesis; dUMP from dCTP (dUTP route): step 2/2. This enzyme is involved in nucleotide metabolism: it produces dUMP, the immediate precursor of thymidine nucleotides and it decreases the intracellular concentration of dUTP so that uracil cannot be incorporated into DNA. This chain is Deoxyuridine 5'-triphosphate nucleotidohydrolase, found in Cereibacter sphaeroides (strain ATCC 17023 / DSM 158 / JCM 6121 / CCUG 31486 / LMG 2827 / NBRC 12203 / NCIMB 8253 / ATH 2.4.1.) (Rhodobacter sphaeroides).